The primary structure comprises 1343 residues: DNA-directed RNA polymerase subunit beta (1343 aa).

The protein belongs to the RNA polymerase beta chain family. As to quaternary structure, the RNAP catalytic core consists of 2 alpha, 1 beta, 1 beta' and 1 omega subunit. When a sigma factor is associated with the core the holoenzyme is formed, which can initiate transcription.

It catalyses the reaction RNA(n) + a ribonucleoside 5'-triphosphate = RNA(n+1) + diphosphate. DNA-dependent RNA polymerase catalyzes the transcription of DNA into RNA using the four ribonucleoside triphosphates as substrates. The sequence is that of DNA-directed RNA polymerase subunit beta from Shewanella pealeana (strain ATCC 700345 / ANG-SQ1).